The following is a 31-amino-acid chain: Alpha-conotoxin Li1.12 (31 aa).

Residues 1-15 (AGNAKMSALMALTIR) constitute a propeptide that is removed on maturation. Cystine bridges form between Cys17/Cys23 and Cys18/Cys30. Cys30 bears the Cysteine amide mark.

The protein belongs to the conotoxin A superfamily. Expressed by the venom duct.

It localises to the secreted. Its function is as follows. Alpha-conotoxins act on postsynaptic membranes, they bind to the nicotinic acetylcholine receptors (nAChR) and thus inhibit them. This toxin inhibits alpha-3-beta-4, alpha-6/alpha-3-beta-4, and alpha-2-beta-4 nAChRs. The protein is Alpha-conotoxin Li1.12 of Conus lividus (Livid cone).